We begin with the raw amino-acid sequence, 534 residues long: Ankyrin repeat and LEM domain-containing protein 1 (534 aa).

4 ANK repeats span residues 4 to 35, 39 to 71, 75 to 104, and 108 to 137; these read TACL…DPNL, DGAA…DPNA, EGLT…DPTL, and DGLR…PTQP. One can recognise an LEM domain in the interval 279–323; it reads HSSVPPMSDLQLLQALRALGYSPGPVTPFTRGHYLRRLQEAQASR. The 116-residue stretch at 370–485 folds into the GIY-YIG domain; sequence KSSFTYLLLD…ALGLQTLTNQ (116 aa). The Nuclear localization signal motif lies at 498–505; it reads PPSRRRRL.

In terms of assembly, interacts (via LEM domain) with BANF1; the interaction may favor BANF1 dimerization. As to expression, predominantly expressed in bone marrow, spleen, thymus, colon and ovary. Expressed also to a lesser extent in lymph nodes, liver and testis.

The protein localises to the cytoplasm. It localises to the nucleus. In terms of biological role, endonuclease that probably plays a role in the DNA damage response and DNA repair. This is Ankyrin repeat and LEM domain-containing protein 1 from Mus musculus (Mouse).